A 334-amino-acid chain; its full sequence is Adenosine deaminase (334 aa).

2 residues coordinate Zn(2+): His12 and His14. Substrate-binding residues include His14, Asp16, and Gly170. Residue His197 coordinates Zn(2+). Glu200 acts as the Proton donor in catalysis. A Zn(2+)-binding site is contributed by Asp278. Asp279 serves as a coordination point for substrate.

It belongs to the metallo-dependent hydrolases superfamily. Adenosine and AMP deaminases family. Adenosine deaminase subfamily. Zn(2+) is required as a cofactor.

The enzyme catalyses adenosine + H2O + H(+) = inosine + NH4(+). The catalysed reaction is 2'-deoxyadenosine + H2O + H(+) = 2'-deoxyinosine + NH4(+). Catalyzes the hydrolytic deamination of adenosine and 2-deoxyadenosine. The chain is Adenosine deaminase from Yersinia pseudotuberculosis serotype O:1b (strain IP 31758).